Reading from the N-terminus, the 375-residue chain is Neuropeptide Y receptor type 4 (375 aa).

At 1-39 (MNTSHLMASLSPAFLQGKNGTNPLDSLYNLSDGCQDSAD) the chain is on the extracellular side. N-linked (GlcNAc...) asparagine glycosylation is found at N2, N19, and N29. The chain crosses the membrane as a helical span at residues 40–60 (LLAFIITTYSVETVLGVLGNL). Topologically, residues 61 to 78 (CLIFVTTRQKEKSNVTNL) are cytoplasmic. Residues 79–99 (LIANLAFSDFLMCLICQPLTV) form a helical membrane-spanning segment. The Extracellular portion of the chain corresponds to 100–116 (TYTIMDYWIFGEVLCKM). The cysteines at positions 114 and 201 are disulfide-linked. A helical membrane pass occupies residues 117-137 (LTFIQCMSVTVSILSLVLVAL). Residues 138-155 (ERHQLIINPTGWKPSISQ) are Cytoplasmic-facing. Residues 156–176 (AYLGIVVIWFISCFLSLPFLA) traverse the membrane as a helical segment. The Extracellular segment spans residues 177-211 (NSILNDLFHYNHSKVVEFLEDKVVCFVSWSSDHHR). N187 carries an N-linked (GlcNAc...) asparagine glycan. A helical membrane pass occupies residues 212–232 (LIYTTFLLLFQYCVPLAFILV). Residues 233 to 262 (CYMRIYQRLQRQRRAFHTHTCSSRVGQMKR) are Cytoplasmic-facing. The helical transmembrane segment at 263 to 283 (INGMLMAMVTAFAVLWLPLHV) threads the bilayer. Residues 284–301 (FNTLEDWYQEAIPACHGN) lie on the Extracellular side of the membrane. The helical transmembrane segment at 302–322 (LIFLMCHLFAMASTCVNPFIY) threads the bilayer. Topologically, residues 323-375 (GFLNINFKKDIKALVLTCRCRPPQGEPEPLPLSTVHTDLSKGSMRMGSKSNVM) are cytoplasmic. C340 is lipidated: S-palmitoyl cysteine.

Belongs to the G-protein coupled receptor 1 family. Detected in colon and brain.

The protein localises to the cell membrane. G protein-coupled receptor for PPY/pancreatic polypeptide/PP that is negatively coupled to cAMP. Has much lower affinity for the NPY/neuropeptide Y and PYY/peptide YY. The chain is Neuropeptide Y receptor type 4 (Npy4r) from Rattus norvegicus (Rat).